The primary structure comprises 89 residues: Mitochondrial import inner membrane translocase subunit Tim9 (89 aa).

N-acetylalanine is present on Ala2. The short motif at 28 to 52 (CFLDCVKDFTTREVKPEEVTCSEHC) is the Twin CX3C motif element. 2 disulfide bridges follow: Cys28–Cys52 and Cys32–Cys48.

It belongs to the small Tim family. In terms of assembly, heterohexamer; composed of 3 copies of TIMM9 and 3 copies of TIMM10/TIM10A, named soluble 70 kDa complex. The complex forms a 6-bladed alpha-propeller structure and associates with the TIMM22 component of the TIM22 complex. Interacts with multi-pass transmembrane proteins in transit. Also forms a complex composed of TIMM9, TIMM10/TIM10A and FXC1/TIM10B.

The protein localises to the mitochondrion inner membrane. In terms of biological role, mitochondrial intermembrane chaperone that participates in the import and insertion of multi-pass transmembrane proteins into the mitochondrial inner membrane. May also be required for the transfer of beta-barrel precursors from the TOM complex to the sorting and assembly machinery (SAM complex) of the outer membrane. Acts as a chaperone-like protein that protects the hydrophobic precursors from aggregation and guide them through the mitochondrial intermembrane space. This chain is Mitochondrial import inner membrane translocase subunit Tim9 (Timm9), found in Mus musculus (Mouse).